Consider the following 1543-residue polypeptide: ATP-binding cassette sub-family A member 10 (1543 aa).

7 helical membrane passes run 83 to 103 (YWLKGFVAFQAAINAAIIEVT), 135 to 155 (WFHFTCLVSFSSFIYFASLNV), 185 to 205 (ICFIFIMSIFMALVITSIPIV), 210 to 230 (FMVIFTLYSLYGLSLIALAFL), 240 to 260 (LAGLAGFLFTVFWGCLGFTVL), 264 to 284 (LPLSLGWVLSLLSPFAFTAGM), and 310 to 330 (IATFFILAFDTLFYLIFTLYF). In terms of domain architecture, ABC transporter 1 spans 391–626 (IRIRNVIKEY…WGIGYHLSLH (236 aa)). 427–434 (GHNGAGKS) serves as a coordination point for ATP. Helical transmembrane passes span 774-794 (LLCLLLVLGIAFIPIILEKIM), 890-910 (LNCFPVLMGIVSNALMGIFNF), 926-946 (IVLDLGFIDGSIFLLLITNCV), 985-1005 (IPLYFLILFSIHLIYYFIFLG), 1014-1034 (FVLVVCIIGCAVSLIFLTYVL), 1046-1066 (GFWSFGFFIILICVSTIMVST), 1073-1093 (LILCMIFIPSFTLLGYVMLLI), and 1113-1133 (KTILLTTLIPYLQSVIFLFVI). Basic and acidic residues predominate over residues 1153-1164 (ISPRSRETHPNP). The interval 1153–1177 (ISPRSRETHPNPEEPEEEDEDVQAE) is disordered. Acidic residues predominate over residues 1165 to 1174 (EEPEEEDEDV). The ABC transporter 2 domain maps to 1206 to 1440 (YETKKSCFST…FGRDYLLEIK (235 aa)). 1239-1246 (GHNGAGKS) is a binding site for ATP.

This sequence belongs to the ABC transporter superfamily. ABCA family. In terms of tissue distribution, widely expressed. Highly expressed in skeletal muscle, heart, brain and gastrointestinal tract.

It is found in the membrane. Functionally, probable transporter which may play a role in macrophage lipid transport and homeostasis. This is ATP-binding cassette sub-family A member 10 (ABCA10) from Homo sapiens (Human).